The sequence spans 272 residues: Ribonuclease HII (272 aa).

Residues 87-272 (KYVAGVDEVG…HRMSFLKNIL (186 aa)) form the RNase H type-2 domain. A divalent metal cation is bound by residues Asp-93, Glu-94, and Asp-188.

This sequence belongs to the RNase HII family. Mn(2+) serves as cofactor. The cofactor is Mg(2+).

The protein localises to the cytoplasm. It catalyses the reaction Endonucleolytic cleavage to 5'-phosphomonoester.. In terms of biological role, endonuclease that specifically degrades the RNA of RNA-DNA hybrids. The protein is Ribonuclease HII of Clostridium perfringens (strain 13 / Type A).